A 204-amino-acid polypeptide reads, in one-letter code: Putative 3-methyladenine DNA glycosylase (204 aa).

This sequence belongs to the DNA glycosylase MPG family.

This is Putative 3-methyladenine DNA glycosylase from Bacillus mycoides (strain KBAB4) (Bacillus weihenstephanensis).